A 708-amino-acid polypeptide reads, in one-letter code: Serine/threonine-protein kinase Nek5 (708 aa).

Residues 4-259 (YDVIKAIGQG…INSILKRPFL (256 aa)) enclose the Protein kinase domain. ATP contacts are provided by residues 10-18 (IGQGAFGKA) and Lys-33. The active-site Proton acceptor is the Asp-128. Disordered stretches follow at residues 376–403 (SYHP…PSQW) and 423–454 (KQLG…FQEL). A compositionally biased stretch (basic and acidic residues) spans 440 to 454 (QELRSNGEEPRFQEL).

This sequence belongs to the protein kinase superfamily. NEK Ser/Thr protein kinase family. NIMA subfamily. Mg(2+) serves as cofactor.

It is found in the cell projection. The protein localises to the cilium. It localises to the flagellum. It catalyses the reaction L-seryl-[protein] + ATP = O-phospho-L-seryl-[protein] + ADP + H(+). The catalysed reaction is L-threonyl-[protein] + ATP = O-phospho-L-threonyl-[protein] + ADP + H(+). This chain is Serine/threonine-protein kinase Nek5 (NEK5), found in Homo sapiens (Human).